The chain runs to 98 residues: NADH-ubiquinone oxidoreductase chain 4L (98 aa).

3 helical membrane-spanning segments follow: residues 1–21 (MPLIYMNITLAFAISLLGMLI), 29–49 (SLLCLEGMMLSLFIMSTLMAL), and 61–81 (VVLLVFAACEAAVGLALLVSI).

It belongs to the complex I subunit 4L family. In terms of assembly, core subunit of respiratory chain NADH dehydrogenase (Complex I) which is composed of 45 different subunits.

It localises to the mitochondrion inner membrane. It carries out the reaction a ubiquinone + NADH + 5 H(+)(in) = a ubiquinol + NAD(+) + 4 H(+)(out). Its function is as follows. Core subunit of the mitochondrial membrane respiratory chain NADH dehydrogenase (Complex I) which catalyzes electron transfer from NADH through the respiratory chain, using ubiquinone as an electron acceptor. Part of the enzyme membrane arm which is embedded in the lipid bilayer and involved in proton translocation. The protein is NADH-ubiquinone oxidoreductase chain 4L (MT-ND4L) of Hylobates lar (Lar gibbon).